Reading from the N-terminus, the 197-residue chain is Cold-regulated 413 plasma membrane protein 1 (197 aa).

Topologically, residues 1 to 40 (MPMKSLRNDHGTLKAMIGSDFNELTIAAKNLATHAFTLTG) are extracellular. The helical transmembrane segment at 41-61 (LGFGTSVLEWVASIAAIYLLV) threads the bilayer. Over 62 to 71 (LDRTNWKTNM) the chain is Cytoplasmic. The chain crosses the membrane as a helical span at residues 72-92 (LTSLLIPYIFFSLPSLIFGIF). Residues 93-94 (RG) are Extracellular-facing. Residues 95–115 (EIGKWIAFVAVVVQLFFPKHA) form a helical membrane-spanning segment. The Cytoplasmic portion of the chain corresponds to 116 to 117 (RE). The helical transmembrane segment at 118–138 (YLELPVALVLLAVVAPNLIAG) threads the bilayer. At 139–141 (TFR) the chain is on the extracellular side. Residues 142–162 (DSWIGLAICLGIGCYLLQEHI) traverse the membrane as a helical segment. Residues 163–176 (RASGGFRNAFTKAN) are Cytoplasmic-facing. The helical transmembrane segment at 177 to 197 (GISNTVGIICLVVFPVWALIF) threads the bilayer.

This sequence belongs to the Cold-regulated 413 protein family.

The protein localises to the membrane. The protein is Cold-regulated 413 plasma membrane protein 1 (COR413PM1) of Arabidopsis thaliana (Mouse-ear cress).